The chain runs to 455 residues: Membrane-bound lytic murein transglycosylase F (455 aa).

The N-terminal stretch at 1 to 21 (MPKSAVSLFAILLLAASVITA) is a signal peptide. Residues 22-264 (CSPQTRPDAM…HIKEQHFGHV (243 aa)) are non-LT domain. The tract at residues 265–455 (KQFNYVTTSL…LKYLDEQGRL (191 aa)) is LT domain. E309 is an active-site residue.

This sequence in the N-terminal section; belongs to the bacterial solute-binding protein 3 family. In the C-terminal section; belongs to the transglycosylase Slt family.

The protein localises to the cell outer membrane. The enzyme catalyses Exolytic cleavage of the (1-&gt;4)-beta-glycosidic linkage between N-acetylmuramic acid (MurNAc) and N-acetylglucosamine (GlcNAc) residues in peptidoglycan, from either the reducing or the non-reducing ends of the peptidoglycan chains, with concomitant formation of a 1,6-anhydrobond in the MurNAc residue.. Murein-degrading enzyme that degrades murein glycan strands and insoluble, high-molecular weight murein sacculi, with the concomitant formation of a 1,6-anhydromuramoyl product. Lytic transglycosylases (LTs) play an integral role in the metabolism of the peptidoglycan (PG) sacculus. Their lytic action creates space within the PG sacculus to allow for its expansion as well as for the insertion of various structures such as secretion systems and flagella. This chain is Membrane-bound lytic murein transglycosylase F, found in Idiomarina loihiensis (strain ATCC BAA-735 / DSM 15497 / L2-TR).